Reading from the N-terminus, the 1184-residue chain is DNA-directed RNA polymerase subunit beta' (1184 aa).

Residues Cys-60, Cys-62, Cys-75, and Cys-78 each contribute to the Zn(2+) site. Mg(2+) contacts are provided by Asp-449, Asp-451, and Asp-453. Residues Cys-794, Cys-867, Cys-874, and Cys-877 each contribute to the Zn(2+) site. The interval 1165-1184 (NDQQERQDKEKEETEVKASN) is disordered.

Belongs to the RNA polymerase beta' chain family. In terms of assembly, the RNAP catalytic core consists of 2 alpha, 1 beta, 1 beta' and 1 omega subunit. When a sigma factor is associated with the core the holoenzyme is formed, which can initiate transcription. Mg(2+) serves as cofactor. It depends on Zn(2+) as a cofactor.

It carries out the reaction RNA(n) + a ribonucleoside 5'-triphosphate = RNA(n+1) + diphosphate. Functionally, DNA-dependent RNA polymerase catalyzes the transcription of DNA into RNA using the four ribonucleoside triphosphates as substrates. This is DNA-directed RNA polymerase subunit beta' from Thermoanaerobacter pseudethanolicus (strain ATCC 33223 / 39E) (Clostridium thermohydrosulfuricum).